The following is a 191-amino-acid chain: Large ribosomal subunit protein uL29m (191 aa).

It belongs to the universal ribosomal protein uL29 family. Component of the mitochondrial large ribosomal subunit. Mature mitochondrial ribosomes consist of a small (37S) and a large (54S) subunit. The 37S subunit contains at least 33 different proteins and 1 molecule of RNA (15S). The 54S subunit contains at least 45 different proteins and 1 molecule of RNA (21S).

Its subcellular location is the mitochondrion. This chain is Large ribosomal subunit protein uL29m (MRPL4), found in Sclerotinia sclerotiorum (strain ATCC 18683 / 1980 / Ss-1) (White mold).